A 594-amino-acid polypeptide reads, in one-letter code: NADH-quinone oxidoreductase subunit C/D (594 aa).

The interval 1-185 (MTTGSALYIP…DPFSLNLAKQ (185 aa)) is NADH dehydrogenase I subunit C. Positions 209-594 (DYMFLNLGPN…IDFVMADVDR (386 aa)) are NADH dehydrogenase I subunit D.

The protein in the N-terminal section; belongs to the complex I 30 kDa subunit family. This sequence in the C-terminal section; belongs to the complex I 49 kDa subunit family. In terms of assembly, NDH-1 is composed of 13 different subunits. Subunits NuoB, CD, E, F, and G constitute the peripheral sector of the complex.

Its subcellular location is the cell inner membrane. The catalysed reaction is a quinone + NADH + 5 H(+)(in) = a quinol + NAD(+) + 4 H(+)(out). In terms of biological role, NDH-1 shuttles electrons from NADH, via FMN and iron-sulfur (Fe-S) centers, to quinones in the respiratory chain. The immediate electron acceptor for the enzyme in this species is believed to be ubiquinone. Couples the redox reaction to proton translocation (for every two electrons transferred, four hydrogen ions are translocated across the cytoplasmic membrane), and thus conserves the redox energy in a proton gradient. The protein is NADH-quinone oxidoreductase subunit C/D of Pseudomonas fluorescens (strain SBW25).